The primary structure comprises 294 residues: 33 kDa chaperonin (294 aa).

2 disulfide bridges follow: cysteine 238/cysteine 240 and cysteine 271/cysteine 274.

Belongs to the HSP33 family. Post-translationally, under oxidizing conditions two disulfide bonds are formed involving the reactive cysteines. Under reducing conditions zinc is bound to the reactive cysteines and the protein is inactive.

The protein resides in the cytoplasm. Functionally, redox regulated molecular chaperone. Protects both thermally unfolding and oxidatively damaged proteins from irreversible aggregation. Plays an important role in the bacterial defense system toward oxidative stress. This is 33 kDa chaperonin from Staphylococcus carnosus (strain TM300).